The following is a 163-amino-acid chain: Large ribosomal subunit protein uL10 (163 aa).

Belongs to the universal ribosomal protein uL10 family. Part of the ribosomal stalk of the 50S ribosomal subunit. The N-terminus interacts with L11 and the large rRNA to form the base of the stalk. The C-terminus forms an elongated spine to which L12 dimers bind in a sequential fashion forming a multimeric L10(L12)X complex.

Its function is as follows. Forms part of the ribosomal stalk, playing a central role in the interaction of the ribosome with GTP-bound translation factors. This chain is Large ribosomal subunit protein uL10, found in Haemophilus influenzae (strain PittEE).